Reading from the N-terminus, the 291-residue chain is ATP synthase gamma chain (291 aa).

It belongs to the ATPase gamma chain family. As to quaternary structure, F-type ATPases have 2 components, CF(1) - the catalytic core - and CF(0) - the membrane proton channel. CF(1) has five subunits: alpha(3), beta(3), gamma(1), delta(1), epsilon(1). CF(0) has three main subunits: a, b and c.

Its subcellular location is the cell membrane. Produces ATP from ADP in the presence of a proton gradient across the membrane. The gamma chain is believed to be important in regulating ATPase activity and the flow of protons through the CF(0) complex. This is ATP synthase gamma chain from Streptococcus equinus (Streptococcus bovis).